A 358-amino-acid polypeptide reads, in one-letter code: UDP-3-O-acylglucosamine N-acyltransferase (358 aa).

Residue His-252 is the Proton acceptor of the active site.

The protein belongs to the transferase hexapeptide repeat family. LpxD subfamily. In terms of assembly, homotrimer.

The enzyme catalyses a UDP-3-O-[(3R)-3-hydroxyacyl]-alpha-D-glucosamine + a (3R)-hydroxyacyl-[ACP] = a UDP-2-N,3-O-bis[(3R)-3-hydroxyacyl]-alpha-D-glucosamine + holo-[ACP] + H(+). The protein operates within bacterial outer membrane biogenesis; LPS lipid A biosynthesis. Its function is as follows. Catalyzes the N-acylation of UDP-3-O-acylglucosamine using 3-hydroxyacyl-ACP as the acyl donor. Is involved in the biosynthesis of lipid A, a phosphorylated glycolipid that anchors the lipopolysaccharide to the outer membrane of the cell. The chain is UDP-3-O-acylglucosamine N-acyltransferase from Paraburkholderia phymatum (strain DSM 17167 / CIP 108236 / LMG 21445 / STM815) (Burkholderia phymatum).